Reading from the N-terminus, the 92-residue chain is Sec-independent protein translocase protein TatA (92 aa).

The helical transmembrane segment at 1–21 (MGIFDWKHWIVILVVVVLVFG) threads the bilayer. Residues 44 to 92 (NDDEKPADPVVNPVPPAQPVHPQATQPITERRTFDVQAEKVEEPTRKDS) form a disordered region. Over residues 72–92 (TERRTFDVQAEKVEEPTRKDS) the composition is skewed to basic and acidic residues.

The protein belongs to the TatA/E family. As to quaternary structure, the Tat system comprises two distinct complexes: a TatABC complex, containing multiple copies of TatA, TatB and TatC subunits, and a separate TatA complex, containing only TatA subunits. Substrates initially bind to the TatABC complex, which probably triggers association of the separate TatA complex to form the active translocon.

It localises to the cell inner membrane. In terms of biological role, part of the twin-arginine translocation (Tat) system that transports large folded proteins containing a characteristic twin-arginine motif in their signal peptide across membranes. TatA could form the protein-conducting channel of the Tat system. The polypeptide is Sec-independent protein translocase protein TatA (Pseudomonas fluorescens (strain SBW25)).